A 32-amino-acid polypeptide reads, in one-letter code: Cytochrome b6-f complex subunit 7 (32 aa).

The helical transmembrane segment at Ile-5–Leu-25 threads the bilayer.

Belongs to the PetM family. As to quaternary structure, the 4 large subunits of the cytochrome b6-f complex are cytochrome b6, subunit IV (17 kDa polypeptide, PetD), cytochrome f and the Rieske protein, while the 4 small subunits are PetG, PetL, PetM and PetN. The complex functions as a dimer.

It localises to the cellular thylakoid membrane. Its function is as follows. Component of the cytochrome b6-f complex, which mediates electron transfer between photosystem II (PSII) and photosystem I (PSI), cyclic electron flow around PSI, and state transitions. The polypeptide is Cytochrome b6-f complex subunit 7 (Prochlorococcus marinus (strain SARG / CCMP1375 / SS120)).